A 714-amino-acid chain; its full sequence is Choline transporter-like protein 5 (714 aa).

The Cytoplasmic segment spans residues 1-33 (MGRRSAAPTSPFGEPRKFDPKFKGPIGKRHCTD). A helical membrane pass occupies residues 34–54 (VLCCIIFVVVILGYIALGVVA). The Extracellular segment spans residues 55–237 (WIHGDPRKII…KIFEDYASSW (183 aa)). 4 N-linked (GlcNAc...) asparagine glycosylation sites follow: asparagine 83, asparagine 132, asparagine 192, and asparagine 205. The helical transmembrane segment at 238-258 (YWILIALFIAMVVSLLFLILL) threads the bilayer. Residues 259–261 (RFT) are Cytoplasmic-facing. A helical transmembrane segment spans residues 262–282 (AGVFFWIFIIGVIGVVGYGIW). At 283–320 (HCFWEYDSLKGVPGADLTIYDIGLQTDFRVYLQLRQTW) the chain is on the extracellular side. A helical membrane pass occupies residues 321–341 (LAFMILLCIVEVIIILMLIFL). Residues 342–346 (RNRIR) are Cytoplasmic-facing. The chain crosses the membrane as a helical span at residues 347-367 (IAIALLQEGSRAIGYIMSTLF). Over 368 to 369 (YP) the chain is Extracellular. Residues 370-390 (IITFILIAICISYWAVTAVFM) form a helical membrane-spanning segment. At 391–455 (ATSGEPIYKV…QYILIFQLCN (65 aa)) the chain is on the cytoplasmic side. A helical transmembrane segment spans residues 456-476 (VFVFLWLVNFSIALGQCTLAG). At 477–510 (AFASYYWAFKKPADIPACPLFSSFGRAIRYHTGS) the chain is on the extracellular side. A helical transmembrane segment spans residues 511-531 (LALGSLILALVQFIRIILEYL). Residues 532 to 605 (DHKLKASQNS…RVAVLDKVTD (74 aa)) are Cytoplasmic-facing. The chain crosses the membrane as a helical span at residues 606-626 (FLLFLGKVFVTGSVGVLAFFF). At 627–644 (FTRKIPVLTDEAPALNYY) the chain is on the extracellular side. Residues 645–665 (WVPLLTVLIGSYLIAHGFFSV) form a helical membrane-spanning segment. The Cytoplasmic segment spans residues 666-711 (YAMCVDTLFLCFCEDLERNNGSSSKPYYMSPNLHRILGKKEILSKK).

Belongs to the CTL (choline transporter-like) family.

It is found in the cell membrane. It catalyses the reaction choline(out) + n H(+)(in) = choline(in) + n H(+)(out). Choline/H+ antiporter. The protein is Choline transporter-like protein 5 (slc44a5) of Xenopus tropicalis (Western clawed frog).